The primary structure comprises 141 residues: Mite group 2 allergen Lep d 2 (141 aa).

A signal peptide spans Met1–Ala16. Disulfide bonds link Cys24-Cys133, Cys37-Cys42, and Cys88-Cys93. A run of 3 repeats spans residues Lys64 to Val65, Lys68 to Val69, and Lys72 to Val73. Residues Lys64 to Val73 are 3 X 2 AA repeats of K-V.

The protein belongs to the NPC2 family. As to quaternary structure, monomer.

The protein resides in the secreted. The chain is Mite group 2 allergen Lep d 2 from Lepidoglyphus destructor (Storage mite).